The following is a 1314-amino-acid chain: E3 ubiquitin-protein ligase RNF123 (1314 aa).

A2 carries the N-acetylalanine modification. A B30.2/SPRY domain is found at 74-254; it reads VDNEEEESQG…VAFNFGSRPL (181 aa). Phosphoserine is present on S675. R683 is subject to Asymmetric dimethylarginine. Positions 968-974 are interaction with NFKB1; that stretch reads WILVRLW. The Zn(2+) site is built by C1254, C1257, C1269, H1271, C1274, C1277, C1288, and C1291. Residues 1254 to 1292 form an RING-type zinc finger; it reads CPICYAHPISAVFQPCGHKSCKACINQHLMNNKDCFFCK.

In terms of assembly, component of the KPC complex composed of RNF123/KPC1 and UBAC1/KPC2. Interacts with UBAC1 and CDKN1B via its N-terminal domain. Interacts with RIGI (via N-terminus) and IFIH1 (via N-terminus). Ubiquitinated, leading to its degradation. Deubiquitinated by USP19, thereby stimulating CDKN1B ubiquitin-dependent degradation.

It localises to the cytoplasm. The catalysed reaction is S-ubiquitinyl-[E2 ubiquitin-conjugating enzyme]-L-cysteine + [acceptor protein]-L-lysine = [E2 ubiquitin-conjugating enzyme]-L-cysteine + N(6)-ubiquitinyl-[acceptor protein]-L-lysine.. The protein operates within protein modification; protein ubiquitination. Its function is as follows. Catalytic subunit of the KPC complex that acts as E3 ubiquitin-protein ligase. Promotes the ubiquitination and proteasome-mediated degradation of CDKN1B which is the cyclin-dependent kinase inhibitor at the G0-G1 transition of the cell cycle. Also acts as a key regulator of the NF-kappa-B signaling by promoting maturation of the NFKB1 component of NF-kappa-B: acts by catalyzing ubiquitination of the NFKB1 p105 precursor, leading to limited proteasomal degradation of NFKB1 p105 and generation of the active NFKB1 p50 subunit. Also functions as an inhibitor of innate antiviral signaling mediated by RIGI and IFIH1 independently of its E3 ligase activity. Interacts with the N-terminal CARD domains of RIGI and IFIH1 and competes with the downstream adapter MAVS. The polypeptide is E3 ubiquitin-protein ligase RNF123 (Homo sapiens (Human)).